The chain runs to 414 residues: Eukaryotic initiation factor 4A-1 (414 aa).

The Q motif signature appears at 41-69 (ESFDDMGLQENLLRGIYAYGFEKPSAIQQ). In terms of domain architecture, Helicase ATP-binding spans 72-242 (IVPFCKGLDV…RKFMNKPVRI (171 aa)). ATP is bound at residue 85–92 (AQSGTGKT). The short motif at 190–193 (DEAD) is the DEAD box element. The Helicase C-terminal domain occupies 253–414 (GIKQFYVNVE…ELPANVADLL (162 aa)).

It belongs to the DEAD box helicase family. eIF4A subfamily. EIF4F is a multi-subunit complex, the composition of which varies with external and internal environmental conditions. It is composed of at least EIF4A, EIF4E and EIF4G.

The enzyme catalyses ATP + H2O = ADP + phosphate + H(+). Its function is as follows. ATP-dependent RNA helicase which is a subunit of the eIF4F complex involved in cap recognition and is required for mRNA binding to ribosome. In the current model of translation initiation, eIF4A unwinds RNA secondary structures in the 5'-UTR of mRNAs which is necessary to allow efficient binding of the small ribosomal subunit, and subsequent scanning for the initiator codon. This is Eukaryotic initiation factor 4A-1 from Oryza sativa subsp. japonica (Rice).